A 315-amino-acid polypeptide reads, in one-letter code: Heterodimeric geranylgeranyl pyrophosphate synthase small subunit 1, chloroplastic (315 aa).

2 residues coordinate Mg(2+): Asp124 and Gly130. Dimethylallyl diphosphate-binding residues include Lys228, Gln265, and Lys280.

Belongs to the FPP/GGPP synthase family. As to quaternary structure, part of a heterodimeric geranyl(geranyl)diphosphate synthase. Requires Mg(2+) as cofactor. As to expression, mainly expressed in trichomes, and, to a lower extent, in roots, leaves, flowers and stems.

The protein resides in the plastid. The protein localises to the chloroplast thylakoid membrane. It localises to the chloroplast. In terms of biological role, heterodimeric geranyl(geranyl)-diphosphate (GPP) synthase small subunit. The small subunit alone is inactive in vitro while the large subunit GGPPS1 catalyzes mainly the production of geranygeranyl-diphosphate in vitro. Upon association of the two subunits, the product profile changes and the production of gerany-diphosphate is strongly increased. In Cannabis sativa (Hemp), this protein is Heterodimeric geranylgeranyl pyrophosphate synthase small subunit 1, chloroplastic.